A 496-amino-acid chain; its full sequence is DNA-dependent metalloprotease SPRTN (496 aa).

Met1 is subject to N-acetylmethionine. The 168-residue stretch at 45–212 folds into the SprT-like domain; it reads LQALFLQFND…KTCGGTYIKI (168 aa). His111 contacts Zn(2+). Glu112 is a catalytic residue. 2 residues coordinate Zn(2+): His115 and His130. N6-acetyllysine is present on Lys230. An SHP-box motif is present at residues 253 to 261; the sequence is FSGKGYVLG. The residue at position 268 (Ser268) is a Phosphoserine. A Glycyl lysine isopeptide (Lys-Gly) (interchain with G-Cter in SUMO2) cross-link involves residue Lys303. The PIP-box signature appears at 326-333; it reads QSVLSSYF. Lys342 is covalently cross-linked (Glycyl lysine isopeptide (Lys-Gly) (interchain with G-Cter in SUMO2); alternate). Lys342 participates in a covalent cross-link: Glycyl lysine isopeptide (Lys-Gly) (interchain with G-Cter in ubiquitin); alternate. Residues 346-459 are disordered; sequence NVNGSPVKSG…STPRSSGGQR (114 aa). A Glycyl lysine isopeptide (Lys-Gly) (interchain with G-Cter in SUMO2) cross-link involves residue Lys361. The segment covering 382-403 has biased composition (low complexity); that stretch reads SSKVTAPASATVTSAAGTSAAI. Ser383 is modified (phosphoserine). The Nuclear localization signal motif lies at 412-423; the sequence is DQFLNKRPRLED. 2 stretches are compositionally biased toward polar residues: residues 426 to 437 and 445 to 457; these read ALNNIKEQTQSG and RPTA…SSGG. Lys431 participates in a covalent cross-link: Glycyl lysine isopeptide (Lys-Gly) (interchain with G-Cter in SUMO2). Residues 461–488 form a UBZ4-type zinc finger; sequence LVNCPVCQGVVLESQINEHLDRCLEGSK. Residues Cys464, Cys467, His479, and Cys483 each coordinate Zn(2+).

This sequence belongs to the Spartan family. Homodimer. Interacts (VIA PIP-box) with PCNA (when ubiquitinated). Interacts (via its SHP-box) with VCP/p97. Interacts with RAD18. Interacts with KCTD13 and POLD3. Zn(2+) serves as cofactor. In terms of processing, autocatalytically cleaved in response to double-stranded DNA-binding: autocatalytic cleavage takes place in trans and leads to inactivation. Post-translationally, monoubiquitinated; monoubiquitination promotes exclusion from chromatin. Deubiquitinated by VCPIP1: deubiquitination is required for subsequent acetylation and recruitment to chromatin and DNA damage sites. Acetylated following deubiquitination by VCPIP1, leading to recruitment to chromatin and DNA damage sites. In terms of processing, phosphorylation by CHEK1 promotes recruitment to chromatin.

Its subcellular location is the nucleus. The protein localises to the chromosome. DNA-binding activates the protease activity: single-stranded DNA-binding specifically activates ability to cleave covalent DNA-protein cross-links (DPCs). In contrast, double-stranded DNA-binding specifically activates autocatalytic cleavage, and subsequent inactivation. In terms of biological role, DNA-dependent metalloendopeptidase that mediates the proteolytic cleavage of covalent DNA-protein cross-links (DPCs) during DNA synthesis, thereby playing a key role in maintaining genomic integrity. DPCs are highly toxic DNA lesions that interfere with essential chromatin transactions, such as replication and transcription, and which are induced by reactive agents, such as UV light or formaldehyde. Associates with the DNA replication machinery and specifically removes DPCs during DNA synthesis. Catalyzes proteolytic cleavage of the HMCES DNA-protein cross-link following unfolding by the BRIP1/FANCJ helicase. Acts as a pleiotropic protease for DNA-binding proteins cross-linked with DNA, such as TOP1, TOP2A, histones H3 and H4. Mediates degradation of DPCs that are not ubiquitinated, while it is not able to degrade ubiquitinated DPCs. SPRTN activation requires polymerase collision with DPCs followed by helicase bypass of DPCs. Involved in recruitment of VCP/p97 to sites of DNA damage. Also acts as an activator of CHEK1 during normal DNA replication by mediating proteolytic cleavage of CHEK1, thereby promoting CHEK1 removal from chromatin and subsequent activation. Does not activate CHEK1 in response to DNA damage. May also act as a 'reader' of ubiquitinated PCNA: recruited to sites of UV damage and interacts with ubiquitinated PCNA and RAD18, the E3 ubiquitin ligase that monoubiquitinates PCNA. Facilitates chromatin association of RAD18 and is required for efficient PCNA monoubiquitination, promoting a feed-forward loop to enhance PCNA ubiquitination and translesion DNA synthesis. This chain is DNA-dependent metalloprotease SPRTN, found in Rattus norvegicus (Rat).